A 382-amino-acid polypeptide reads, in one-letter code: Sphingoid long-chain base transporter RSB1 (382 aa).

Residues 1–34 lie on the Extracellular side of the membrane; that stretch reads MSNATNNTLGSLLPQLEAAANSNSLYGGMVPNLR. N-linked (GlcNAc...) asparagine glycans are attached at residues Asn3 and Asn6. Residues 35-55 traverse the membrane as a helical segment; it reads FNITMIVIWGILLTIHVVQLL. Topologically, residues 56-57 are cytoplasmic; the sequence is MR. The chain crosses the membrane as a helical span at residues 58–78; sequence QYWFSIAFICTGILEVLGFIG. The Extracellular segment spans residues 79–90; it reads RTWSHSNVADMD. Residues 91–111 form a helical membrane-spanning segment; sequence AFLLNMICLTIAPVFTMGGIY. At 112 to 135 the chain is on the cytoplasmic side; the sequence is YQLAKLIEVYGHRFSLLPSPMAYS. Residues 136–156 form a helical membrane-spanning segment; it reads FIFICSDIVSLVVQAVGGGLC. Topologically, residues 157–171 are extracellular; sequence GVAVTDGTSTTTGNH. The chain crosses the membrane as a helical span at residues 172–192; sequence VFIAGLAIQVASMAIFLMLWF. At 193–241 the chain is on the cytoplasmic side; the sequence is HFLFRIYISVRWEHINSRPISLSLLKISQTEVDYLYREKFHFLRLEPKR. The helical transmembrane segment at 242–262 threads the bilayer; it reads WVFHYFNLAITVAVLTIFTRC. Over 263 to 281 the chain is Extracellular; it reads CYRLAELVVGWDGYLITHE. The helical transmembrane segment at 282-302 threads the bilayer; sequence WYFIILDALMMAIATVTLTIF. The Cytoplasmic portion of the chain corresponds to 303–382; that stretch reads HPGFAFKGRS…LFSSKKKAKL (80 aa).

Belongs to the lipid-translocating exporter (LTE) (TC 9.A.26.1) family.

It is found in the cell membrane. Its function is as follows. Catalyzes the ATP-dependent translocation of sphingoid long-chain bases (LCBs) from the cytoplasmic site toward the extracytoplasmic side of the membrane (flip-flop). Involved in the establishment of the functional lipid asymmetry of the plasma membrane. Regulates intracellular levels of LCBs, sphingolipid precursors that are growth inhibitory at increased levels. The chain is Sphingoid long-chain base transporter RSB1 (RSB1) from Saccharomyces cerevisiae (strain ATCC 204508 / S288c) (Baker's yeast).